The chain runs to 266 residues: Non-structural maintenance of chromosomes element 1 homolog (266 aa).

Residues 1–102 (MQGNTRRTGV…SVSKMASDFA (102 aa)) are interaction with NSMCE3. Residues 191-232 (CNICRSLLIQGQSCETCGIRMHLPCVAKYFQSSSEPHCPHCN) form an RING-type; atypical zinc finger. Residues 243–252 (FDPEKERETG) show a composition bias toward basic and acidic residues. The interval 243 to 266 (FDPEKERETGMSRSNKRPSRSRQH) is disordered. Positions 256-266 (SNKRPSRSRQH) are enriched in basic residues.

Belongs to the NSE1 family. As to quaternary structure, component of the SMC5-SMC6 complex which consists at least of SMC5, SMC6, NSMCE2, NSMCE1, NSMCE4A or EID3 and NSMCE3. NSMCE1, NSMCE4A or EID3 and NSMCE3 probably form a subcomplex that bridges the head domains of the SMC5-SMC6 heterodimer. Interacts with NSMCE3. In terms of processing, ubiquitinated.

The protein resides in the nucleus. It localises to the chromosome. It is found in the telomere. The enzyme catalyses S-ubiquitinyl-[E2 ubiquitin-conjugating enzyme]-L-cysteine + [acceptor protein]-L-lysine = [E2 ubiquitin-conjugating enzyme]-L-cysteine + N(6)-ubiquitinyl-[acceptor protein]-L-lysine.. Functionally, RING-type zinc finger-containing E3 ubiquitin ligase that assembles with melanoma antigen protein (MAGE) to catalyze the direct transfer of ubiquitin from E2 ubiquitin-conjugating enzyme to a specific substrate. Within MAGE-RING ubiquitin ligase complex, MAGE stimulates and specifies ubiquitin ligase activity likely through recruitment and/or stabilization of the E2 ubiquitin-conjugating enzyme at the E3:substrate complex. Involved in maintenance of genome integrity, DNA damage response and DNA repair. NSMCE3/MAGEG1 and NSMCE1 ubiquitin ligase are components of SMC5-SMC6 complex and may positively regulate homologous recombination-mediated DNA repair. The protein is Non-structural maintenance of chromosomes element 1 homolog (NSMCE1) of Bos taurus (Bovine).